The chain runs to 233 residues: Orotidine 5'-phosphate decarboxylase (233 aa).

Residues D13, K35, 62 to 71, T122, R182, Q191, G211, and R212 each bind substrate; that span reads DLKFHDIPNT. The active-site Proton donor is the K64.

This sequence belongs to the OMP decarboxylase family. Type 1 subfamily. As to quaternary structure, homodimer.

It carries out the reaction orotidine 5'-phosphate + H(+) = UMP + CO2. The protein operates within pyrimidine metabolism; UMP biosynthesis via de novo pathway; UMP from orotate: step 2/2. Functionally, catalyzes the decarboxylation of orotidine 5'-monophosphate (OMP) to uridine 5'-monophosphate (UMP). In Pseudomonas entomophila (strain L48), this protein is Orotidine 5'-phosphate decarboxylase.